Here is a 106-residue protein sequence, read N- to C-terminus: Immunoglobulin lambda constant 2 (106 aa).

Residues 7–101 (PSVTLFPPSS…EGSTVEKTVA (95 aa)) enclose the Ig-like domain. A disulfide bridge links Cys-28 with Cys-87.

As to quaternary structure, immunoglobulins are composed of two identical heavy chains and two identical light chains; disulfide-linked.

It localises to the secreted. Its subcellular location is the cell membrane. Functionally, constant region of immunoglobulin light chains. Immunoglobulins, also known as antibodies, are membrane-bound or secreted glycoproteins produced by B lymphocytes. In the recognition phase of humoral immunity, the membrane-bound immunoglobulins serve as receptors which, upon binding of a specific antigen, trigger the clonal expansion and differentiation of B lymphocytes into immunoglobulins-secreting plasma cells. Secreted immunoglobulins mediate the effector phase of humoral immunity, which results in the elimination of bound antigens. The antigen binding site is formed by the variable domain of one heavy chain, together with that of its associated light chain. Thus, each immunoglobulin has two antigen binding sites with remarkable affinity for a particular antigen. The variable domains are assembled by a process called V-(D)-J rearrangement and can then be subjected to somatic hypermutations which, after exposure to antigen and selection, allow affinity maturation for a particular antigen. This Homo sapiens (Human) protein is Immunoglobulin lambda constant 2.